A 471-amino-acid polypeptide reads, in one-letter code: ATP synthase subunit beta (471 aa).

156–163 (GGAGVGKT) is an ATP binding site.

It belongs to the ATPase alpha/beta chains family. In terms of assembly, F-type ATPases have 2 components, CF(1) - the catalytic core - and CF(0) - the membrane proton channel. CF(1) has five subunits: alpha(3), beta(3), gamma(1), delta(1), epsilon(1). CF(0) has three main subunits: a(1), b(2) and c(9-12). The alpha and beta chains form an alternating ring which encloses part of the gamma chain. CF(1) is attached to CF(0) by a central stalk formed by the gamma and epsilon chains, while a peripheral stalk is formed by the delta and b chains.

The protein localises to the cell membrane. The catalysed reaction is ATP + H2O + 4 H(+)(in) = ADP + phosphate + 5 H(+)(out). Its function is as follows. Produces ATP from ADP in the presence of a proton gradient across the membrane. The catalytic sites are hosted primarily by the beta subunits. The protein is ATP synthase subunit beta of Staphylococcus carnosus (strain TM300).